Consider the following 482-residue polypeptide: Proline--tRNA ligase (482 aa).

Positions 117, 119, and 148 each coordinate L-proline. ATP-binding residues include Arg148, Glu150, Gln232, and Thr235. His237 provides a ligand contact to L-proline. ATP is bound at residue Ser269. The segment at 346-376 (EMRGVPLRVEIGPRDLEKGAAVISRRDTGEK) is interaction with tRNA. Zn(2+) contacts are provided by Cys436, Cys441, Cys464, and Cys467.

Belongs to the class-II aminoacyl-tRNA synthetase family. ProS type 3 subfamily. Homodimer. The dimer is functionally asymmetric: only one of the two active sites at a time is able to form prolyl-adenylate, and only one tRNA molecule binds per dimer. Interacts with LeuRS, which enhances tRNA(Pro) aminoacylation.

It localises to the cytoplasm. The enzyme catalyses tRNA(Pro) + L-proline + ATP = L-prolyl-tRNA(Pro) + AMP + diphosphate. Catalyzes the attachment of proline to tRNA(Pro) in a two-step reaction: proline is first activated by ATP to form Pro-AMP and then transferred to the acceptor end of tRNA(Pro). Can inadvertently accommodate and process cysteine. The chain is Proline--tRNA ligase (proS) from Methanothermobacter thermautotrophicus (strain ATCC 29096 / DSM 1053 / JCM 10044 / NBRC 100330 / Delta H) (Methanobacterium thermoautotrophicum).